The primary structure comprises 101 residues: Apolipoprotein C-II (101 aa).

Residues 1-22 form the signal peptide; it reads MGARHLLALLLVLLVLGFEVQG. Positions 66–74 are lipid binding; it reads TMDEKIRDM. Positions 78 to 101 are lipoprotein lipase cofactor; it reads STAAVSTYVGIFTDQLLSLLKGDE.

Belongs to the apolipoprotein C2 family. Proapolipoprotein C-II is synthesized as a sialic acid containing glycoprotein which is subsequently desialylated prior to its proteolytic processing. In terms of processing, proapolipoprotein C-II, the major form found in plasma undergoes proteolytic cleavage of its N-terminal hexapeptide to generate apolipoprotein C-II, which occurs as the minor form in plasma.

The protein localises to the secreted. Functionally, component of chylomicrons, very low-density lipoproteins (VLDL), low-density lipoproteins (LDL), and high-density lipoproteins (HDL) in plasma. Plays an important role in lipoprotein metabolism as an activator of lipoprotein lipase. Both proapolipoprotein C-II and apolipoprotein C-II can activate lipoprotein lipase. The chain is Apolipoprotein C-II (APOC2) from Tapirus indicus (Asiatic tapir).